The sequence spans 284 residues: Bifunctional protein FolD (284 aa).

Residue 166 to 168 (GAS) coordinates NADP(+).

This sequence belongs to the tetrahydrofolate dehydrogenase/cyclohydrolase family. Homodimer.

The enzyme catalyses (6R)-5,10-methylene-5,6,7,8-tetrahydrofolate + NADP(+) = (6R)-5,10-methenyltetrahydrofolate + NADPH. It catalyses the reaction (6R)-5,10-methenyltetrahydrofolate + H2O = (6R)-10-formyltetrahydrofolate + H(+). Its pathway is one-carbon metabolism; tetrahydrofolate interconversion. Functionally, catalyzes the oxidation of 5,10-methylenetetrahydrofolate to 5,10-methenyltetrahydrofolate and then the hydrolysis of 5,10-methenyltetrahydrofolate to 10-formyltetrahydrofolate. This chain is Bifunctional protein FolD, found in Legionella pneumophila (strain Corby).